We begin with the raw amino-acid sequence, 558 residues long: MEKQWWKESVVYQIYPRSFMDSNGDGIGDLRGIISKLDYLKELGIDVIWLSPVYESPNDDNGYDISDYCKIMNEFGTMEDWDELLHEMHERNMKLMMDLVVNHTSDEHNWFIESRKSKDNKYRDYYIWRPGKEGKEPNNWGAAFSGSAWQYDEMTDEYYLHLFSKKQPDLNWDNEKVRQDVYEMMKFWLEKGIDGFRMDVINFISKEEGLPTVETEEEGYVSGHKHFMNGPNIHKYLHEMNEEVLSHYDIMTVGEMPGVTTEEAKLYTGEERKELQMVFQFEHMDLDSGEGGKWDVKPCSLLTLKENLTKWQKALEHTGWNSLYWNNHDQPRVVSRFGNDGMYRIESAKMLATVLHMMKGTPYIYQGEEIGMTNVRFESIDEYRDIETLNMYKEKVMERGEDIEKVMQSIYIKGRDNARTPMQWDDQNHAGFTTGEPWITVNPNYKEINVKQAIQNKDSIFYYYKKLIELRKNNEIVVYGSYDLILENNPSIFAYVRTYGVEKLLVIANFTAEECIFELPEDISYSEVELLIHNYDVENGPIENITLRPYEAMVFKLK.

Residues D21, N23, D25, and D29 each contribute to the Ca(2+) site. The Nucleophile role is filled by D199. Catalysis depends on E255, which acts as the Proton donor.

Belongs to the glycosyl hydrolase 13 family.

Its subcellular location is the cytoplasm. It catalyses the reaction Hydrolysis of (1-&gt;6)-alpha-D-glucosidic linkages in some oligosaccharides produced from starch and glycogen by alpha-amylase, and in isomaltose.. The chain is Oligo-1,6-glucosidase (malL) from Bacillus cereus.